Here is a 344-residue protein sequence, read N- to C-terminus: Small ribosomal subunit protein bS1m (344 aa).

Ser327 is modified (phosphoserine).

It belongs to the bacterial ribosomal protein bS1 family. As to quaternary structure, component of the mitochondrial small ribosomal subunit (mt-SSU). Mature yeast 74S mitochondrial ribosomes consist of a small (37S) and a large (54S) subunit. The 37S small subunit contains a 15S ribosomal RNA (15S mt-rRNA) and 34 different proteins. The 54S large subunit contains a 21S rRNA (21S mt-rRNA) and 46 different proteins.

It localises to the mitochondrion. Functionally, component of the mitochondrial ribosome (mitoribosome), a dedicated translation machinery responsible for the synthesis of mitochondrial genome-encoded proteins, including at least some of the essential transmembrane subunits of the mitochondrial respiratory chain. The mitoribosomes are attached to the mitochondrial inner membrane and translation products are cotranslationally integrated into the membrane. bS1m functionally interacts with the 5'-UTR of mitochondrial mRNAs. This Saccharomyces cerevisiae (strain ATCC 204508 / S288c) (Baker's yeast) protein is Small ribosomal subunit protein bS1m (MRP51).